Here is a 247-residue protein sequence, read N- to C-terminus: Carboxy-S-adenosyl-L-methionine synthase (247 aa).

S-adenosyl-L-methionine is bound by residues Tyr39, 64-66 (GCS), 89-90 (DN), 117-118 (DI), Asn132, and Arg199.

The protein belongs to the class I-like SAM-binding methyltransferase superfamily. Cx-SAM synthase family. In terms of assembly, homodimer.

The enzyme catalyses prephenate + S-adenosyl-L-methionine = carboxy-S-adenosyl-L-methionine + 3-phenylpyruvate + H2O. Its function is as follows. Catalyzes the conversion of S-adenosyl-L-methionine (SAM) to carboxy-S-adenosyl-L-methionine (Cx-SAM). The chain is Carboxy-S-adenosyl-L-methionine synthase from Cronobacter sakazakii (strain ATCC BAA-894) (Enterobacter sakazakii).